Here is a 374-residue protein sequence, read N- to C-terminus: P2Y purinoceptor 2 (374 aa).

The Extracellular portion of the chain corresponds to 1 to 32 (MAAGLDSWNSTINGTWEGDELGYKCRFNEDFK). Residues N9 and N13 are each glycosylated (N-linked (GlcNAc...) asparagine). A helical membrane pass occupies residues 33-59 (YVLLPVSYGVVCVLGLCLNVVALYIFL). Residues 60–70 (CRLKTWNASTT) are Cytoplasmic-facing. A helical membrane pass occupies residues 71-93 (YMFHLAVSDSLYAASLPLLVYYY). Over 94-110 (AQGDHWPFSTVLCKLVR) the chain is Extracellular. C106 and C183 are oxidised to a cystine. A helical transmembrane segment spans residues 111 to 129 (FLFYTNLYCSILFLTCISV). The Cytoplasmic portion of the chain corresponds to 130–152 (HRCLGVLRPLHSLSWGHARYARR). The chain crosses the membrane as a helical span at residues 153 to 172 (VAAVVWVLVLACQAPVLYFV). Over 173–194 (TTSVRGTRITCHDTSARELFSH) the chain is Extracellular. Residues 195–220 (FVAYSSVMLGLLFAVPFSIILVCYVL) traverse the membrane as a helical segment. Over 221–245 (MARRLLKPAYGTTGLPRAKRKSVRT) the chain is Cytoplasmic. The chain crosses the membrane as a helical span at residues 246-268 (IALVLAVFALCFLPFHVTRTLYY). Over 269-286 (SFRSLDLSCHTLNAINMA) the chain is Extracellular. A helical transmembrane segment spans residues 287 to 308 (YKITRPLASANSCLDPVLYFLA). Over 309–374 (GQRLVRFARD…AGSETKDIRL (66 aa)) the chain is Cytoplasmic. Residues 318–374 (DAKPATEPTPSPQARRKLGLHRPNRTDTVRKDLSISSDDSRRTESTPAGSETKDIRL) are disordered. The span at 331–340 (ARRKLGLHRP) shows a compositional bias: basic residues. Residues 341–361 (NRTDTVRKDLSISSDDSRRTE) are compositionally biased toward basic and acidic residues.

It belongs to the G-protein coupled receptor 1 family.

The protein resides in the cell membrane. Receptor for ATP and UTP coupled to G-proteins that activate a phosphatidylinositol-calcium second messenger system. The affinity range is UTP = ATP &gt; ATP-gamma-S &gt;&gt; 2-methylthio-ATP = ADP. In Rattus norvegicus (Rat), this protein is P2Y purinoceptor 2 (P2ry2).